Here is a 564-residue protein sequence, read N- to C-terminus: Ferric/cupric reductase transmembrane component 2 (564 aa).

2 consecutive transmembrane segments (helical) span residues 10-30 (TLGS…LFLL) and 66-86 (FIFL…LVML). N-linked (GlcNAc...) asparagine glycosylation is present at Asn106. Residues 110-130 (VAARLGYLSCGLFFVSYFFSL) traverse the membrane as a helical segment. The Ferric oxidoreductase domain occupies 114-229 (LGYLSCGLFF…TCSVLIIFLI (116 aa)). Heme is bound by residues His150 and His164. Transmembrane regions (helical) follow at residues 152–172 (WLSV…MIFS), 184–204 (ISIY…ASLP), and 210–230 (FFEW…FLIW). Heme is bound by residues His218 and His232. An FAD-binding FR-type domain is found at 254 to 410 (RLFRSIWNRS…DGPYGTTSNV (157 aa)). A glycan (N-linked (GlcNAc...) asparagine) is linked at Asn261. 310-316 (HPFTLAS) provides a ligand contact to FAD. Asn350 is a glycosylation site (N-linked (GlcNAc...) asparagine). 419 to 427 (LIAGGVGFS) contributes to the NAD(+) binding site. N-linked (GlcNAc...) asparagine glycosylation is found at Asn442, Asn496, and Asn548.

It belongs to the ferric reductase (FRE) family. It depends on FAD as a cofactor. The cofactor is heme.

The protein resides in the cell membrane. It localises to the endoplasmic reticulum membrane. The catalysed reaction is 2 a Fe(II)-siderophore + NADP(+) + H(+) = 2 a Fe(III)-siderophore + NADPH. Functionally, metalloreductase responsible for reducing extracellular iron and copper prior to import. Catalyzes the reductive uptake of Fe(3+)-salts and Fe(3+) bound to catecholate or hydroxamate siderophores. Fe(3+) is reduced to Fe(2+), which then dissociates from the siderophore and can be imported by the high-affinity Fe(2+) transport complex in the plasma membrane. Also participates in Cu(2+) reduction and Cu(+) uptake. This chain is Ferric/cupric reductase transmembrane component 2 (frp2), found in Schizosaccharomyces pombe (strain 972 / ATCC 24843) (Fission yeast).